A 100-amino-acid polypeptide reads, in one-letter code: Urease subunit gamma (100 aa).

It belongs to the urease gamma subunit family. As to quaternary structure, heterotrimer of UreA (gamma), UreB (beta) and UreC (alpha) subunits. Three heterotrimers associate to form the active enzyme.

The protein resides in the cytoplasm. It catalyses the reaction urea + 2 H2O + H(+) = hydrogencarbonate + 2 NH4(+). It participates in nitrogen metabolism; urea degradation; CO(2) and NH(3) from urea (urease route): step 1/1. This Nitrosospira multiformis (strain ATCC 25196 / NCIMB 11849 / C 71) protein is Urease subunit gamma.